Reading from the N-terminus, the 388-residue chain is 3-amino-5-hydroxybenzoate synthase (388 aa).

Lys-188 is subject to N6-(pyridoxal phosphate)lysine.

This sequence belongs to the degT/dnrJ/eryC1 family. As to quaternary structure, homodimer. Can interact with RifL. Pyridoxal 5'-phosphate serves as cofactor.

It carries out the reaction 5-deoxy-5-amino-3-dehydroshikimate = 3-amino-5-hydroxybenzoate + H2O + H(+). The enzyme catalyses UDP-3-oxo-alpha-D-glucose + L-glutamine = UDP-alpha-D-kanosamine + 2-oxoglutaramate. The protein operates within antibiotic biosynthesis; rifamycin B biosynthesis. Its activity is regulated as follows. AHBA synthase activity is activated by 3-deoxy-D-arabinoheptulosonic acid 7-phosphate (DAHP), an intermediate in the shikimate pathway, and is irreversibly inhibited by gabaculine (5-amino-1,3-cyclohexadiene-1-carboxylate). Catalyzes the dehydration and aromatization of 5-amino-5-deoxy-3-dehydroshikimate (aminoDHS) to 3-amino-5-hydroxybenzoate (AHBA), a compound that then serves as the starter unit for the assembly of a polyketide during the biosynthesis of rifamycin B and other ansamycin antibiotics. Cannot utilize 5-deoxy-5-amino-3-dehydroquinate (aminoDHQ), 5-deoxy-5-aminoshikimate (aminoSA), quinate, 3-dehydroquinate, or 3-dehydroshikimate (DHS) as substrate. In terms of biological role, in a complex with RifL, RifK may have a second function in the AHBA pathway, acting as a transaminase introducing the nitrogen into the first pathway intermediate, UDP-3-keto-D-glucose, to give UDP-kanosamine. Appears to use glutamine as the nitrogen donor; NH(4)(+) or asparagine are 30% less effective as nitrogen donors and neither glutamate nor aspartate show activity. This chain is 3-amino-5-hydroxybenzoate synthase (rifK), found in Amycolatopsis mediterranei (strain S699) (Nocardia mediterranei).